The sequence spans 202 residues: Protein DCV1 (202 aa).

An N-terminal signal peptide occupies residues 1–18 (MLNYKLILLFSSFLQLIS). Transmembrane regions (helical) follow at residues 91–107 (IGGL…LTFI), 137–155 (ILTL…LLCM), and 168–189 (LVWL…FLSF).

Its subcellular location is the membrane. The chain is Protein DCV1 (DCV1) from Saccharomyces cerevisiae (strain ATCC 204508 / S288c) (Baker's yeast).